A 431-amino-acid polypeptide reads, in one-letter code: Adenylosuccinate synthetase (431 aa).

Residues 13-19 (GDEGKGK) and 41-43 (GHT) each bind GTP. Residue D14 is the Proton acceptor of the active site. 2 residues coordinate Mg(2+): D14 and G41. IMP-binding positions include 14–17 (DEGK), 39–42 (NAGH), T130, R144, Q225, T240, and R304. Residue H42 is the Proton donor of the active site. 300-306 (ATTGRKR) is a substrate binding site. GTP contacts are provided by residues R306, 332–334 (KLD), and 415–417 (STG).

This sequence belongs to the adenylosuccinate synthetase family. As to quaternary structure, homodimer. Mg(2+) is required as a cofactor.

It is found in the cytoplasm. The enzyme catalyses IMP + L-aspartate + GTP = N(6)-(1,2-dicarboxyethyl)-AMP + GDP + phosphate + 2 H(+). It participates in purine metabolism; AMP biosynthesis via de novo pathway; AMP from IMP: step 1/2. Functionally, plays an important role in the de novo pathway of purine nucleotide biosynthesis. Catalyzes the first committed step in the biosynthesis of AMP from IMP. The chain is Adenylosuccinate synthetase from Shewanella oneidensis (strain ATCC 700550 / JCM 31522 / CIP 106686 / LMG 19005 / NCIMB 14063 / MR-1).